The sequence spans 457 residues: Argininosuccinate lyase (457 aa).

The protein belongs to the lyase 1 family. Argininosuccinate lyase subfamily.

The protein resides in the cytoplasm. The enzyme catalyses 2-(N(omega)-L-arginino)succinate = fumarate + L-arginine. Its pathway is amino-acid biosynthesis; L-arginine biosynthesis; L-arginine from L-ornithine and carbamoyl phosphate: step 3/3. This chain is Argininosuccinate lyase, found in Shigella boydii serotype 18 (strain CDC 3083-94 / BS512).